Here is a 372-residue protein sequence, read N- to C-terminus: ATP-sensitive inward rectifier potassium channel 1 (372 aa).

Residues 1-58 (MFKHLRRWFVTHIFGRSRQRARLVSKDGRCNIEFGNVDAQSRFIFFVDIWTTVLDLKW) are Cytoplasmic-facing. Ser-25 carries the post-translational modification Phosphoserine; by SGK1. A helical membrane pass occupies residues 59–83 (RYKMTVFITAFLGSWFLFGLLWYVV). Over 84 to 108 (AYVHKDLPEFYPPDNRTPCVENING) the chain is Extracellular. Asn-98 carries N-linked (GlcNAc...) asparagine glycosylation. The helical; Pore-forming intramembrane region spans 109–120 (MTSAFLFSLETQ). Positions 121–127 (VTIGYGF) form an intramembrane region, pore-forming. The short motif at 122 to 127 (TIGYGF) is the Selectivity filter element. The Extracellular segment spans residues 128 to 136 (RFVTEQCAT). The helical transmembrane segment at 137-158 (AIFLLIFQSILGVIINSFMCGA) threads the bilayer. The Cytoplasmic segment spans residues 159-372 (ILAKISRPKK…EVDETDDTQM (214 aa)). Positions 161 to 188 (AKISRPKKRAKTITFSKNAVISKRGGKL) are polyphosphoinositide (PIP2)-binding. 204–211 (GSHIYGKL) is a binding site for ATP.

This sequence belongs to the inward rectifier-type potassium channel (TC 1.A.2.1) family. KCNJ1 subfamily. As to quaternary structure, interacts with SGK1 and SLC9A3R2/NHERF2. In terms of processing, phosphorylation at Ser-25 by SGK1 is necessary for its expression at the cell membrane.

Its subcellular location is the cell membrane. It catalyses the reaction K(+)(in) = K(+)(out). Inhibited by WNK3. Activated by phosphatidylinositol 4,5 biphosphate (PtdIns(4,5)P2). Inward rectifier potassium channels are characterized by a greater tendency to allow potassium to flow into the cell rather than out of it. Their voltage dependence is regulated by the concentration of extracellular potassium; as external potassium is raised, the voltage range of the channel opening shifts to more positive voltages. The inward rectification is mainly due to the blockage of outward current by internal magnesium. This channel is activated by internal ATP and can be blocked by external barium. In the kidney, probably plays a major role in potassium homeostasis. The protein is ATP-sensitive inward rectifier potassium channel 1 (Kcnj1) of Mus musculus (Mouse).